Consider the following 484-residue polypeptide: Glycogen synthase (484 aa).

ADP-alpha-D-glucose is bound at residue Lys15.

This sequence belongs to the glycosyltransferase 1 family. Bacterial/plant glycogen synthase subfamily.

It catalyses the reaction [(1-&gt;4)-alpha-D-glucosyl](n) + ADP-alpha-D-glucose = [(1-&gt;4)-alpha-D-glucosyl](n+1) + ADP + H(+). The protein operates within glycan biosynthesis; glycogen biosynthesis. In terms of biological role, synthesizes alpha-1,4-glucan chains using ADP-glucose. The chain is Glycogen synthase from Geotalea uraniireducens (strain Rf4) (Geobacter uraniireducens).